Here is a 197-residue protein sequence, read N- to C-terminus: Probable inosine/xanthosine triphosphatase (197 aa).

9–14 contacts substrate; that stretch reads TSNPIK. Mg(2+)-binding residues include D36 and D65.

Belongs to the YjjX NTPase family. In terms of assembly, homodimer. The cofactor is Mg(2+). Mn(2+) serves as cofactor.

It catalyses the reaction XTP + H2O = XDP + phosphate + H(+). The catalysed reaction is ITP + H2O = IDP + phosphate + H(+). In terms of biological role, phosphatase that hydrolyzes non-canonical purine nucleotides such as XTP and ITP to their respective diphosphate derivatives. Probably excludes non-canonical purines from DNA/RNA precursor pool, thus preventing their incorporation into DNA/RNA and avoiding chromosomal lesions. In Aeropyrum pernix (strain ATCC 700893 / DSM 11879 / JCM 9820 / NBRC 100138 / K1), this protein is Probable inosine/xanthosine triphosphatase.